The sequence spans 93 residues: Defensin-like protein 210 (93 aa).

Positions 1 to 19 (MKTIILFLTLLVISSSCTS) are cleaved as a signal peptide. 3 cysteine pairs are disulfide-bonded: Cys-63/Cys-80, Cys-66/Cys-85, and Cys-70/Cys-87.

It belongs to the DEFL family.

It localises to the secreted. The chain is Defensin-like protein 210 from Arabidopsis thaliana (Mouse-ear cress).